The following is a 383-amino-acid chain: Acetylornithine deacetylase (383 aa).

Residue H80 participates in Zn(2+) binding. The active site involves D82. A Zn(2+)-binding site is contributed by D112. Residue E144 is part of the active site. 3 residues coordinate Zn(2+): E145, E169, and H355.

This sequence belongs to the peptidase M20A family. ArgE subfamily. In terms of assembly, homodimer. Zn(2+) is required as a cofactor. It depends on Co(2+) as a cofactor. Requires glutathione as cofactor.

Its subcellular location is the cytoplasm. The enzyme catalyses N(2)-acetyl-L-ornithine + H2O = L-ornithine + acetate. It functions in the pathway amino-acid biosynthesis; L-arginine biosynthesis; L-ornithine from N(2)-acetyl-L-ornithine (linear): step 1/1. In terms of biological role, catalyzes the hydrolysis of the amide bond of N(2)-acetylated L-amino acids. Cleaves the acetyl group from N-acetyl-L-ornithine to form L-ornithine, an intermediate in L-arginine biosynthesis pathway, and a branchpoint in the synthesis of polyamines. This Shigella boydii serotype 18 (strain CDC 3083-94 / BS512) protein is Acetylornithine deacetylase.